The following is an 816-amino-acid chain: Protein hunchback (816 aa).

Disordered stretches follow at residues L33–D92, Q129–N151, Y165–V185, and A197–N229. Low complexity-rich tracts occupy residues S49 to Q60, Q79 to Q89, and Q129 to Q139. The residue at position 199 (T199) is a Phosphothreonine. S209, S228, S230, and S231 each carry phosphoserine. Residues E219–N229 show a composition bias toward basic and acidic residues. C2H2-type zinc fingers lie at residues Y261–H283, L290–H312, F318–H340, and Y346–H364. Disordered regions lie at residues V387–Q427, L536–H612, and G679–T734. Low complexity-rich tracts occupy residues S399–Q427 and L536–Q560. Positions N567–D578 are enriched in acidic residues. Phosphoserine occurs at positions 584 and 587. Low complexity predominate over residues S712–T734. 2 consecutive C2H2-type zinc fingers follow at residues Y763–H785 and F791–H815.

The protein belongs to the hunchback C2H2-type zinc-finger protein family.

The protein resides in the nucleus. Gap class segmentation protein that controls development of head structures. The protein is Protein hunchback of Drosophila virilis (Fruit fly).